The primary structure comprises 858 residues: Bifunctional uridylyltransferase/uridylyl-removing enzyme (858 aa).

A uridylyltransferase region spans residues 1–324; sequence MSASVAAPPP…PATSGVTRVL (324 aa). A uridylyl-removing region spans residues 325–681; sequence SPGRFVEKQG…ARPSPVGDAL (357 aa). One can recognise an HD domain in the interval 443 to 565; it reads VDQHILMVLR…VGNERRLTAL (123 aa). ACT domains lie at 682-761 and 790-858; these read QVLV…PEPS and ILSV…AIAV.

This sequence belongs to the GlnD family. Requires Mg(2+) as cofactor.

The enzyme catalyses [protein-PII]-L-tyrosine + UTP = [protein-PII]-uridylyl-L-tyrosine + diphosphate. It catalyses the reaction [protein-PII]-uridylyl-L-tyrosine + H2O = [protein-PII]-L-tyrosine + UMP + H(+). With respect to regulation, uridylyltransferase (UTase) activity is inhibited by glutamine, while glutamine activates uridylyl-removing (UR) activity. Functionally, modifies, by uridylylation and deuridylylation, the PII regulatory proteins (GlnB and homologs), in response to the nitrogen status of the cell that GlnD senses through the glutamine level. Under low glutamine levels, catalyzes the conversion of the PII proteins and UTP to PII-UMP and PPi, while under higher glutamine levels, GlnD hydrolyzes PII-UMP to PII and UMP (deuridylylation). Thus, controls uridylylation state and activity of the PII proteins, and plays an important role in the regulation of nitrogen assimilation and metabolism. The polypeptide is Bifunctional uridylyltransferase/uridylyl-removing enzyme (Burkholderia thailandensis (strain ATCC 700388 / DSM 13276 / CCUG 48851 / CIP 106301 / E264)).